Here is a 223-residue protein sequence, read N- to C-terminus: MKDTLKLYFVCGTVDCSRKNILTVVEEALQAGITLFQFREKGFTALQGKEKIAMAKQLQILCKQYQVPFIIDDDIDLVELIDADGLHIGQNDLPVDEARRRLPDKIIGLSVSTMDEYQKSQLSVVDYIGIGPFNPTQSKADAKPAVGNRTTKAVREINQDIPIVAIGGITSDFVHDIIESGADGIAVISAISKANHIVDATRQLRYEVEKALVNRQKHSDVIK.

Residues 37–41 and Asp-72 contribute to the 4-amino-2-methyl-5-(diphosphooxymethyl)pyrimidine site; that span reads QFREK. Asp-73 and Asp-92 together coordinate Mg(2+). Ser-110 provides a ligand contact to 4-amino-2-methyl-5-(diphosphooxymethyl)pyrimidine. 136-138 contributes to the 2-[(2R,5Z)-2-carboxy-4-methylthiazol-5(2H)-ylidene]ethyl phosphate binding site; the sequence is TQS. Lys-139 contacts 4-amino-2-methyl-5-(diphosphooxymethyl)pyrimidine. 2-[(2R,5Z)-2-carboxy-4-methylthiazol-5(2H)-ylidene]ethyl phosphate contacts are provided by residues Gly-168 and 188–189; that span reads IS.

It belongs to the thiamine-phosphate synthase family. It depends on Mg(2+) as a cofactor.

It catalyses the reaction 2-[(2R,5Z)-2-carboxy-4-methylthiazol-5(2H)-ylidene]ethyl phosphate + 4-amino-2-methyl-5-(diphosphooxymethyl)pyrimidine + 2 H(+) = thiamine phosphate + CO2 + diphosphate. The catalysed reaction is 2-(2-carboxy-4-methylthiazol-5-yl)ethyl phosphate + 4-amino-2-methyl-5-(diphosphooxymethyl)pyrimidine + 2 H(+) = thiamine phosphate + CO2 + diphosphate. It carries out the reaction 4-methyl-5-(2-phosphooxyethyl)-thiazole + 4-amino-2-methyl-5-(diphosphooxymethyl)pyrimidine + H(+) = thiamine phosphate + diphosphate. It participates in cofactor biosynthesis; thiamine diphosphate biosynthesis; thiamine phosphate from 4-amino-2-methyl-5-diphosphomethylpyrimidine and 4-methyl-5-(2-phosphoethyl)-thiazole: step 1/1. Condenses 4-methyl-5-(beta-hydroxyethyl)thiazole monophosphate (THZ-P) and 2-methyl-4-amino-5-hydroxymethyl pyrimidine pyrophosphate (HMP-PP) to form thiamine monophosphate (TMP). The polypeptide is Thiamine-phosphate synthase (Streptococcus agalactiae serotype Ia (strain ATCC 27591 / A909 / CDC SS700)).